Here is a 119-residue protein sequence, read N- to C-terminus: Large ribosomal subunit protein bL17 (119 aa).

This sequence belongs to the bacterial ribosomal protein bL17 family. Part of the 50S ribosomal subunit. Contacts protein L32.

The sequence is that of Large ribosomal subunit protein bL17 from Psychrobacter sp. (strain PRwf-1).